A 220-amino-acid chain; its full sequence is Small ribosomal subunit protein uS2 (220 aa).

The protein belongs to the universal ribosomal protein uS2 family.

The chain is Small ribosomal subunit protein uS2 from Methanococcus maripaludis (strain C5 / ATCC BAA-1333).